The primary structure comprises 129 residues: Large ribosomal subunit protein bL21 (129 aa).

The tract at residues 102–129 is disordered; that stretch reads TDNAKPTKGPRPKKEKVAKEATKEDAAA. Basic and acidic residues predominate over residues 116–129; that stretch reads EKVAKEATKEDAAA.

It belongs to the bacterial ribosomal protein bL21 family. As to quaternary structure, part of the 50S ribosomal subunit. Contacts protein L20.

Functionally, this protein binds to 23S rRNA in the presence of protein L20. The polypeptide is Large ribosomal subunit protein bL21 (Bradyrhizobium diazoefficiens (strain JCM 10833 / BCRC 13528 / IAM 13628 / NBRC 14792 / USDA 110)).